The primary structure comprises 211 residues: Uridine kinase (211 aa).

12–19 (GGSGSGKT) is an ATP binding site.

The protein belongs to the uridine kinase family.

The protein resides in the cytoplasm. The catalysed reaction is uridine + ATP = UMP + ADP + H(+). It carries out the reaction cytidine + ATP = CMP + ADP + H(+). Its pathway is pyrimidine metabolism; CTP biosynthesis via salvage pathway; CTP from cytidine: step 1/3. It participates in pyrimidine metabolism; UMP biosynthesis via salvage pathway; UMP from uridine: step 1/1. The protein is Uridine kinase of Geobacillus kaustophilus (strain HTA426).